The chain runs to 255 residues: MQFDVVTLFPDMFRALTDWGITSRAAKQERYSLRTWNPRDFTTDNYRTIDDRPYGGGPGMVMLARPLEDAIGAAKAAQAEQGIGAPRVVMMSPQGVTLNHDRVMRFAAEPGLILLCGRYEAIDQRLLDRVVDEEVSLGDFVLSGGELPAMALMDAVVRQLPGVLNDSQSAVQDSFVDVLLDCPHYTRPEEYNGVRVPDVLLGGHHAEIETWRRREALRNTLNKRPDLIVKARKNKMLSRADEAWLASLAKEESKA.

Residues Gly-117 and 137-142 (LGDFVL) contribute to the S-adenosyl-L-methionine site.

It belongs to the RNA methyltransferase TrmD family. Homodimer.

The protein localises to the cytoplasm. The catalysed reaction is guanosine(37) in tRNA + S-adenosyl-L-methionine = N(1)-methylguanosine(37) in tRNA + S-adenosyl-L-homocysteine + H(+). Specifically methylates guanosine-37 in various tRNAs. This Paraburkholderia xenovorans (strain LB400) protein is tRNA (guanine-N(1)-)-methyltransferase.